A 234-amino-acid chain; its full sequence is Glucosamine-6-phosphate deaminase (234 aa).

Asp-62 functions as the Proton acceptor; for enolization step in the catalytic mechanism. Asn-128 acts as the For ring-opening step in catalysis. His-130 (proton acceptor; for ring-opening step) is an active-site residue. Glu-135 (for ring-opening step) is an active-site residue.

The protein belongs to the glucosamine/galactosamine-6-phosphate isomerase family. NagB subfamily.

It catalyses the reaction alpha-D-glucosamine 6-phosphate + H2O = beta-D-fructose 6-phosphate + NH4(+). It participates in amino-sugar metabolism; N-acetylneuraminate degradation; D-fructose 6-phosphate from N-acetylneuraminate: step 5/5. In terms of biological role, catalyzes the reversible isomerization-deamination of glucosamine 6-phosphate (GlcN6P) to form fructose 6-phosphate (Fru6P) and ammonium ion. This Streptococcus suis (strain 98HAH33) protein is Glucosamine-6-phosphate deaminase.